The following is a 584-amino-acid chain: Pectinesterase 3 (584 aa).

The first 50 residues, 1–50 (MTRIKEFFTKLSESSTNQNISNIPKKKKKLFLALFATLLVVAAVIGIVAG), serve as a signal peptide directing secretion. A propeptide spanning residues 51–266 (VNSRKNSGDN…LSTGDRRLLQ (216 aa)) is cleaved from the precursor. Asparagine 108, asparagine 129, and asparagine 226 each carry an N-linked (GlcNAc...) asparagine glycan. The substrate site is built by threonine 348 and glutamine 378. Aspartate 401 (proton donor) is an active-site residue. A disulfide bond links cysteine 415 and cysteine 435. The active-site Nucleophile is aspartate 422. 2 residues coordinate substrate: arginine 490 and tryptophan 492.

In the N-terminal section; belongs to the PMEI family. The protein in the C-terminal section; belongs to the pectinesterase family. In terms of tissue distribution, in the peel, expression is localized to the region of the flavedo close to the oil glands, and to the innermost layer of the albedo. In the lamella, expression is localized to the cell layers opposing the fruit tissue, and to the parenchyma surrounding the vascular tissue. In the fruit vesicles, expression is restricted to the peripheral cell layers and stalk cells. High levels of expression are detected in the core matrix.

The protein resides in the secreted. The protein localises to the cell wall. The catalysed reaction is [(1-&gt;4)-alpha-D-galacturonosyl methyl ester](n) + n H2O = [(1-&gt;4)-alpha-D-galacturonosyl](n) + n methanol + n H(+). It functions in the pathway glycan metabolism; pectin degradation; 2-dehydro-3-deoxy-D-gluconate from pectin: step 1/5. Functionally, acts in the modification of cell walls via demethylesterification of cell wall pectin. In Citrus sinensis (Sweet orange), this protein is Pectinesterase 3.